A 396-amino-acid chain; its full sequence is Tryptophan synthase beta chain (396 aa).

K86 carries the post-translational modification N6-(pyridoxal phosphate)lysine.

This sequence belongs to the TrpB family. As to quaternary structure, tetramer of two alpha and two beta chains. Pyridoxal 5'-phosphate is required as a cofactor.

The catalysed reaction is (1S,2R)-1-C-(indol-3-yl)glycerol 3-phosphate + L-serine = D-glyceraldehyde 3-phosphate + L-tryptophan + H2O. It functions in the pathway amino-acid biosynthesis; L-tryptophan biosynthesis; L-tryptophan from chorismate: step 5/5. Functionally, the beta subunit is responsible for the synthesis of L-tryptophan from indole and L-serine. This is Tryptophan synthase beta chain from Blochmanniella pennsylvanica (strain BPEN).